We begin with the raw amino-acid sequence, 200 residues long: Small ribosomal subunit protein uS4c (200 aa).

One can recognise an S4 RNA-binding domain in the interval 91 to 154 (MRLDNVVFRL…NSRKMVTEAN (64 aa)).

Belongs to the universal ribosomal protein uS4 family. As to quaternary structure, part of the 30S ribosomal subunit. Contacts protein S5. The interaction surface between S4 and S5 is involved in control of translational fidelity.

The protein resides in the plastid. Its subcellular location is the chloroplast. In terms of biological role, one of the primary rRNA binding proteins, it binds directly to 16S rRNA where it nucleates assembly of the body of the 30S subunit. With S5 and S12 plays an important role in translational accuracy. The protein is Small ribosomal subunit protein uS4c (rps4) of Oltmannsiellopsis viridis (Marine flagellate).